The sequence spans 209 residues: Endonuclease III (209 aa).

A HhH domain is found at 108–127 (RTELESLPGVGRKTANIILN). [4Fe-4S] cluster-binding residues include Cys187, Cys194, Cys197, and Cys203.

It belongs to the Nth/MutY family. [4Fe-4S] cluster is required as a cofactor.

The enzyme catalyses 2'-deoxyribonucleotide-(2'-deoxyribose 5'-phosphate)-2'-deoxyribonucleotide-DNA = a 3'-end 2'-deoxyribonucleotide-(2,3-dehydro-2,3-deoxyribose 5'-phosphate)-DNA + a 5'-end 5'-phospho-2'-deoxyribonucleoside-DNA + H(+). In terms of biological role, DNA repair enzyme that has both DNA N-glycosylase activity and AP-lyase activity. The DNA N-glycosylase activity releases various damaged pyrimidines from DNA by cleaving the N-glycosidic bond, leaving an AP (apurinic/apyrimidinic) site. The AP-lyase activity cleaves the phosphodiester bond 3' to the AP site by a beta-elimination, leaving a 3'-terminal unsaturated sugar and a product with a terminal 5'-phosphate. In Buchnera aphidicola subsp. Schizaphis graminum (strain Sg), this protein is Endonuclease III.